The following is a 91-amino-acid chain: Small ribosomal subunit protein uS19 (91 aa).

It belongs to the universal ribosomal protein uS19 family.

Functionally, protein S19 forms a complex with S13 that binds strongly to the 16S ribosomal RNA. This Burkholderia cenocepacia (strain HI2424) protein is Small ribosomal subunit protein uS19.